The primary structure comprises 175 residues: Translation initiation factor IF-3 (175 aa).

It belongs to the IF-3 family. As to quaternary structure, monomer.

It is found in the cytoplasm. Its function is as follows. IF-3 binds to the 30S ribosomal subunit and shifts the equilibrium between 70S ribosomes and their 50S and 30S subunits in favor of the free subunits, thus enhancing the availability of 30S subunits on which protein synthesis initiation begins. The chain is Translation initiation factor IF-3 from Staphylococcus aureus (strain NCTC 8325 / PS 47).